The following is an 88-amino-acid chain: Large ribosomal subunit protein bL27 (88 aa).

The tract at residues 1–24 (MAHKKGTGSTRNGRDSNSKRLGVK) is disordered.

This sequence belongs to the bacterial ribosomal protein bL27 family.

This is Large ribosomal subunit protein bL27 from Prochlorococcus marinus (strain MIT 9313).